The primary structure comprises 303 residues: Mycothiol acetyltransferase (303 aa).

N-acetyltransferase domains lie at 10–156 and 162–303; these read ALPG…LAVP and LAVR…SGPR. A 1D-myo-inositol 2-(L-cysteinylamino)-2-deoxy-alpha-D-glucopyranoside-binding site is contributed by Glu-41. An acetyl-CoA-binding site is contributed by 86-88; sequence LLV. 1D-myo-inositol 2-(L-cysteinylamino)-2-deoxy-alpha-D-glucopyranoside is bound by residues Glu-189, Lys-228, and Glu-235. Residues 239–241 and 246–252 contribute to the acetyl-CoA site; these read LGV and SGAGLGR. Tyr-272 contacts 1D-myo-inositol 2-(L-cysteinylamino)-2-deoxy-alpha-D-glucopyranoside. Residue 277 to 282 participates in acetyl-CoA binding; that stretch reads NLRAVR.

Belongs to the acetyltransferase family. MshD subfamily. Monomer.

The enzyme catalyses 1D-myo-inositol 2-(L-cysteinylamino)-2-deoxy-alpha-D-glucopyranoside + acetyl-CoA = mycothiol + CoA + H(+). In terms of biological role, catalyzes the transfer of acetyl from acetyl-CoA to desacetylmycothiol (Cys-GlcN-Ins) to form mycothiol. In Kineococcus radiotolerans (strain ATCC BAA-149 / DSM 14245 / SRS30216), this protein is Mycothiol acetyltransferase.